Reading from the N-terminus, the 588-residue chain is MAEMGSKGVTAGKIASNVQKKLTRAQEKVLQKLGKADETKDEQFEQCVQNFNKQLTEGTRLQKDLRTYLASVKAMHEASKKLSECLQEVYEPEWPGRDEANKIAENNDLLWMDYHQKLVDQALLTMDTYLGQFPDIKSRIAKRGRKLVDYDSARHHYESLQTAKKKDEAKIAKPVSLLEKAAPQWCQGKLQAHLVAQTNLLRNQAEEELIKAQKVFEEMNVDLQEELPSLWNSRVGFYVNTFQSIAGLEENFHKEMSKLNQNLNDVLVSLEKQHGSNTFTVKAQPSDSAPEKGNKSPSPPPDGSPAATPEIRVNHEPEPASGASPGATIPKSPSQLRKGPPVPPPPKHTPSKEMKQEQILSLFDDAFVPEISVTTPSQFEAPGPFSEQASLLDLDFEPLPPVASPVKAPTPSGQSIPWDLWEPTESQAGVLPSGEPSSAEGSFAVAWPSQTAEPGPAQPAEASEVVGGTQEPGETAASEATSSSLPAVVVETFSATVNGAVEGSTTTGRLDLPPGFMFKVQAQHDYTATDTDELQLKAGDVVLVIPFQNPEEQDEGWLMGVKESDWNQHKELEKCRGVFPENFTERVQ.

At Ala2 the chain carries N-acetylalanine. The segment at Ala2–Ala122 is interaction with BIN2. Coiled-coil stretches lie at residues Ala15–Glu42 and His193–His274. The BAR domain maps to Val29 to Ser276. Residues Phe279–Lys355 form a disordered region. Ser296, Ser298, and Ser304 each carry phosphoserine. Thr308 is modified (phosphothreonine). 2 positions are modified to phosphoserine: Ser324 and Ser332. The clathrin-binding stretch occupies residues Phe379–Glu422. Positions Pro448–Ser483 are disordered. The span at Glu474–Ser483 shows a compositional bias: low complexity. The 74-residue stretch at Gly515 to Gln588 folds into the SH3 domain.

In terms of assembly, heterodimer with AMPH. Binds SH3GLB1. Interacts (via SH3 domain) with DNM1. Interacts with SYNJ1. Interacts (via SH3 domain) with DNM2. Interacts with CLTC. Interacts with AP2A2. Interacts with AP2B1. Interacts with MYC (via N-terminal transactivation domain); the interaction requires the integrity of the conserved MYC box regions 1 and 2. Interacts with BIN2. Interacts with SNX4. Interacts (via BAR domain) with BACE1. Binds (via BAR domain) F-actin. Phosphorylated by protein kinase C. As to expression, highly expressed in the brain and muscle. Isoform AMPH2-1 is expressed only in the brain where it is concentrated in axon initial segments and nodes of Ranvier. Isoform AMPH2-2 is widely expressed.

The protein resides in the nucleus. The protein localises to the cytoplasm. It is found in the endosome. Its subcellular location is the cell membrane. It localises to the sarcolemma. The protein resides in the T-tubule. Is a key player in the control of plasma membrane curvature, and membrane shaping and remodeling. Required in muscle cells for the formation of T-tubules, tubular invaginations of the plasma membrane that function in depolarization-contraction coupling. Required in muscle cells for the formation of T-tubules, tubular invaginations of the plasma membrane that function in depolarization-contraction coupling. Is a negative regulator of endocytosis. Is also involved in the regulation of intracellular vesicles sorting, modulation of BACE1 trafficking and the control of amyloid-beta production. In neuronal circuits, endocytosis regulation may influence the internalization of PHF-tau aggregates. May be involved in the regulation of MYC activity and the control cell proliferation. The protein is Myc box-dependent-interacting protein 1 (Bin1) of Rattus norvegicus (Rat).